A 202-amino-acid polypeptide reads, in one-letter code: GTP-binding protein rho1 (202 aa).

13–20 (GDGACGKT) lines the GTP pocket. Residues 35–43 (YVPTVFENY) carry the Effector region motif. GTP-binding positions include 60-64 (DTAGQ) and 118-121 (CKAD). Cys199 is modified (cysteine methyl ester). A lipid anchor (S-geranylgeranyl cysteine) is attached at Cys199. The propeptide at 200-202 (ILL) is removed in mature form.

This sequence belongs to the small GTPase superfamily. Rho family.

The protein resides in the cell membrane. Its function is as follows. Involved in the regulation of cell wall growth and actin cytoskeleton organization. Activates (1,3)-beta-D-glucan synthase. The protein is GTP-binding protein rho1 (rho1) of Schizosaccharomyces pombe (strain 972 / ATCC 24843) (Fission yeast).